Consider the following 175-residue polypeptide: Crossover junction endodeoxyribonuclease RuvC (175 aa).

Residues Asp11, Glu71, and His143 contribute to the active site. The Mg(2+) site is built by Asp11, Glu71, and His143.

It belongs to the RuvC family. In terms of assembly, homodimer which binds Holliday junction (HJ) DNA. The HJ becomes 2-fold symmetrical on binding to RuvC with unstacked arms; it has a different conformation from HJ DNA in complex with RuvA. In the full resolvosome a probable DNA-RuvA(4)-RuvB(12)-RuvC(2) complex forms which resolves the HJ. It depends on Mg(2+) as a cofactor.

Its subcellular location is the cytoplasm. It carries out the reaction Endonucleolytic cleavage at a junction such as a reciprocal single-stranded crossover between two homologous DNA duplexes (Holliday junction).. Functionally, the RuvA-RuvB-RuvC complex processes Holliday junction (HJ) DNA during genetic recombination and DNA repair. Endonuclease that resolves HJ intermediates. Cleaves cruciform DNA by making single-stranded nicks across the HJ at symmetrical positions within the homologous arms, yielding a 5'-phosphate and a 3'-hydroxyl group; requires a central core of homology in the junction. The consensus cleavage sequence is 5'-(A/T)TT(C/G)-3'. Cleavage occurs on the 3'-side of the TT dinucleotide at the point of strand exchange. HJ branch migration catalyzed by RuvA-RuvB allows RuvC to scan DNA until it finds its consensus sequence, where it cleaves and resolves the cruciform DNA. The chain is Crossover junction endodeoxyribonuclease RuvC from Parvibaculum lavamentivorans (strain DS-1 / DSM 13023 / NCIMB 13966).